The chain runs to 614 residues: MMRQATMDFSTPSVFDQQRGDSSEEVDLTMVYQAASNGDVNALTAVIREDPSILECCDSEGCTPLMHAVSGRQADTVKLLLKMGANINMQDAYGRTSLCLATYLGWLEGCVSLLRNGAKHNIPDKNGRLPLHAATAEPDMRLLTVLLQQSNISEINHQDNEGMTPLHWAAFHNQPQHTQMLLKKGADPTLVDKDFKTALHWAVQSGNRILCSIILSHHQGPSIINYDDESGKTCVHIAAAAGFSDIIHELARVPECNLQALDVDDRTPLHWAAAAGKAECVQSLLELGMDSNLRDINESTPLAYALYCGHTACVKLLSQESRTEPTRPPPSQSSRPQKKERRFNVLNQIFCKNKKEEQRAHQKDPSRDRYREEDTSEVNDIITTFDSIVGTNCQEQPGDQVAMVEFKKKTSDNSKYLLPEKKPLARKGLPPIRTQSLPPITLGNNFLTASHRATSHAGLSSAPHHMAQRSQKSRSEQDLLNNRTGCQMLLDNPWKSDSNQVFSYKVWTVSSSDKLLDRLLSVRPGHQEVSVPPHLRHLHNPSSGQNFQHLSPNRHKIRDLPFTRNNLAPLPDQKFLSGEPLRTNRVLPAIPSQRRHSTAAEESEHSANPTSDEN.

Residues 1–20 are disordered; sequence MMRQATMDFSTPSVFDQQRG. Residues 7–16 are compositionally biased toward polar residues; that stretch reads MDFSTPSVFD. ANK repeat units follow at residues 26-55, 60-89, 93-125, 126-157, 161-190, 194-223, 230-260, 264-293, and 297-326; these read VDLTMVYQAASNGDVNALTAVIREDPSILE, EGCTPLMHAVSGRQADTVKLLLKMGANINM, YGRTSLCLATYLGWLEGCVSLLRNGAKHNIPDK, NGRLPLHAATAEPDMRLLTVLLQQSNISEINH, EGMTPLHWAAFHNQPQHTQMLLKKGADPTL, DFKTALHWAVQSGNRILCSIILSHHQGPSI, SGKTCVHIAAAAGFSDIIHELARVPECNLQA, DDRTPLHWAAAAGKAECVQSLLELGMDSNL, and NESTPLAYALYCGHTACVKLLSQESRTEPT. Disordered stretches follow at residues 319-339, 354-375, 454-476, and 564-614; these read QESRTEPTRPPPSQSSRPQKK, KKEEQRAHQKDPSRDRYREEDT, TSHAGLSSAPHHMAQRSQKSRSE, and RNNL…SDEN. Over residues 354-373 the composition is skewed to basic and acidic residues; that stretch reads KKEEQRAHQKDPSRDRYREE. Ser475 bears the Phosphoserine mark.

The chain is Ankyrin repeat domain-containing protein 55 (ANKRD55) from Homo sapiens (Human).